A 211-amino-acid polypeptide reads, in one-letter code: MISYYFQGVALGAAMILPLGPQNAFVMNQGIRRQYHLMIALLCALSDLVLISAGIFGGSALLMQSPWLLALVTWGGVAFLLWYGFGALKTAMSSNLELASAEVMKQGRWKIIATMLAVTWLNPHVYLDTFVVLGSLGGQLAMEPKRWFALGTISASFLWFFGLALLAAWLAPRLRTAKAQRIINILVGVVMWLIAFQLAREGVAHMHALFN.

Transmembrane regions (helical) follow at residues 1–21, 37–57, 68–88, 111–131, 147–167, and 179–199; these read MISY…PLGP, LMIA…GIFG, LLAL…FGAL, IIAT…DTFV, WFAL…ALLA, and AQRI…FQLA.

It belongs to the LysE/ArgO transporter (TC 2.A.75) family.

The protein resides in the cell inner membrane. It carries out the reaction L-arginine(in) = L-arginine(out). Functionally, involved in the export of arginine. Important to control the intracellular level of arginine and the correct balance between arginine and lysine. This Salmonella paratyphi B (strain ATCC BAA-1250 / SPB7) protein is Arginine exporter protein ArgO.